The sequence spans 126 residues: Large ribosomal subunit protein eL32 (126 aa).

Belongs to the eukaryotic ribosomal protein eL32 family.

This chain is Large ribosomal subunit protein eL32, found in Thermococcus onnurineus (strain NA1).